Reading from the N-terminus, the 469-residue chain is NADH-quinone oxidoreductase subunit N (469 aa).

14 consecutive transmembrane segments (helical) span residues 6-26 (IWII…LLLG), 37-57 (VGVA…PAAL), 61-81 (LGVA…LTAA), 96-116 (ISGE…AVVS), 121-141 (LLIL…LVAI), 156-176 (LLLG…LYAA), 197-217 (PIAL…ISLV), 234-254 (VVAF…LLLL), 263-283 (LHTP…LAAL), 291-311 (MLAY…LTGS), 315-335 (FAAV…AFGA), 362-382 (AGIL…AGFI), 397-419 (IPLA…RVVV), and 441-461 (IALS…SPLL).

This sequence belongs to the complex I subunit 2 family. As to quaternary structure, NDH-1 is composed of 14 different subunits. Subunits NuoA, H, J, K, L, M, N constitute the membrane sector of the complex.

The protein resides in the cell inner membrane. The catalysed reaction is a quinone + NADH + 5 H(+)(in) = a quinol + NAD(+) + 4 H(+)(out). NDH-1 shuttles electrons from NADH, via FMN and iron-sulfur (Fe-S) centers, to quinones in the respiratory chain. The immediate electron acceptor for the enzyme in this species is believed to be ubiquinone. Couples the redox reaction to proton translocation (for every two electrons transferred, four hydrogen ions are translocated across the cytoplasmic membrane), and thus conserves the redox energy in a proton gradient. The chain is NADH-quinone oxidoreductase subunit N from Geotalea uraniireducens (strain Rf4) (Geobacter uraniireducens).